We begin with the raw amino-acid sequence, 539 residues long: Putative S-adenosyl-L-methionine-dependent methyltransferase MAP_4079 (539 aa).

S-adenosyl-L-methionine-binding positions include D134 and 163 to 164; that span reads DL. Residues 290 to 392 are disordered; it reads AGYGRGRRRP…RGEPGERGGQ (103 aa). A compositionally biased stretch (polar residues) spans 301 to 313; it reads SATSCRGTCSSPR. The span at 341-351 shows a compositional bias: gly residues; that stretch reads HGFGNQCGGPD.

It belongs to the UPF0677 family.

Exhibits S-adenosyl-L-methionine-dependent methyltransferase activity. In Mycolicibacterium paratuberculosis (strain ATCC BAA-968 / K-10) (Mycobacterium paratuberculosis), this protein is Putative S-adenosyl-L-methionine-dependent methyltransferase MAP_4079.